A 105-amino-acid polypeptide reads, in one-letter code: Small ribosomal subunit protein uS10 (105 aa).

Belongs to the universal ribosomal protein uS10 family. Part of the 30S ribosomal subunit.

Functionally, involved in the binding of tRNA to the ribosomes. The protein is Small ribosomal subunit protein uS10 of Lachnoclostridium phytofermentans (strain ATCC 700394 / DSM 18823 / ISDg) (Clostridium phytofermentans).